Reading from the N-terminus, the 305-residue chain is Uracil-DNA glycosylase (305 aa).

The active-site Proton acceptor is the D148.

It belongs to the uracil-DNA glycosylase (UDG) superfamily. UNG family.

It is found in the host nucleus. It carries out the reaction Hydrolyzes single-stranded DNA or mismatched double-stranded DNA and polynucleotides, releasing free uracil.. Functionally, excises uracil residues from the DNA which can arise as a result of misincorporation of dUMP residues by DNA polymerase or deamination of cytosines. Therefore may reduce deleterious uracil incorporation into the viral genome, particularly in terminally differentiated cells which lack DNA repair enzymes. This chain is Uracil-DNA glycosylase, found in Varicella-zoster virus (strain Dumas) (HHV-3).